The chain runs to 430 residues: Phosphoserine aminotransferase 1, chloroplastic (430 aa).

The N-terminal 51 residues, 1-51, are a transit peptide targeting the chloroplast; that stretch reads MAATTNSFLVGSNNTQIPALKPKSSSQSFLHLSKPNTVNFVSKTKPVAVRC. Val-52 carries the N-acetylvaline modification. Arg-111 provides a ligand contact to L-glutamate. Residues 145 to 146, Trp-171, Thr-221, Asp-241, and Gln-264 contribute to the pyridoxal 5'-phosphate site; that span reads AT. Lys-265 is modified (N6-(pyridoxal phosphate)lysine). 306-307 provides a ligand contact to pyridoxal 5'-phosphate; the sequence is NT.

It belongs to the class-V pyridoxal-phosphate-dependent aminotransferase family. SerC subfamily. As to quaternary structure, homodimer. Pyridoxal 5'-phosphate is required as a cofactor. As to expression, ubiquitous, but expressed preferentially in light-grown roots and shoots. Detected in root meristems and in root tissues surrounding the vascular bundle.

Its subcellular location is the plastid. The protein localises to the chloroplast. It catalyses the reaction O-phospho-L-serine + 2-oxoglutarate = 3-phosphooxypyruvate + L-glutamate. The enzyme catalyses 4-(phosphooxy)-L-threonine + 2-oxoglutarate = (R)-3-hydroxy-2-oxo-4-phosphooxybutanoate + L-glutamate. It participates in amino-acid biosynthesis; L-serine biosynthesis; L-serine from 3-phospho-D-glycerate: step 2/3. Its pathway is cofactor biosynthesis; pyridoxine 5'-phosphate biosynthesis; pyridoxine 5'-phosphate from D-erythrose 4-phosphate: step 3/5. Inhibited by high concentration of cysteine and by 3-phosphonooxypyruvate. Not inhibited by serine, threonine, valine, glycine, tryptophan and O-acetyl-L-serine. In terms of biological role, involved in the plastidial phosphorylated pathway of serine biosynthesis (PPSB). Catalyzes the reversible conversion of 3-phosphohydroxypyruvate to phosphoserine. In Arabidopsis thaliana (Mouse-ear cress), this protein is Phosphoserine aminotransferase 1, chloroplastic.